A 420-amino-acid polypeptide reads, in one-letter code: Glucose-1-phosphate adenylyltransferase (420 aa).

Residues tyrosine 107, glycine 172, 187 to 188 (EK), and serine 205 each bind alpha-D-glucose 1-phosphate.

It belongs to the bacterial/plant glucose-1-phosphate adenylyltransferase family. As to quaternary structure, homotetramer.

The enzyme catalyses alpha-D-glucose 1-phosphate + ATP + H(+) = ADP-alpha-D-glucose + diphosphate. The protein operates within glycan biosynthesis; glycogen biosynthesis. In terms of biological role, involved in the biosynthesis of ADP-glucose, a building block required for the elongation reactions to produce glycogen. Catalyzes the reaction between ATP and alpha-D-glucose 1-phosphate (G1P) to produce pyrophosphate and ADP-Glc. The polypeptide is Glucose-1-phosphate adenylyltransferase (Rhizobium etli (strain ATCC 51251 / DSM 11541 / JCM 21823 / NBRC 15573 / CFN 42)).